Consider the following 200-residue polypeptide: Small ribosomal subunit protein uS4c (200 aa).

The 64-residue stretch at 91 to 154 folds into the S4 RNA-binding domain; the sequence is MRLDNVVFRL…NSRKMVTEAN (64 aa).

The protein belongs to the universal ribosomal protein uS4 family. In terms of assembly, part of the 30S ribosomal subunit. Contacts protein S5. The interaction surface between S4 and S5 is involved in control of translational fidelity.

Its subcellular location is the plastid. The protein localises to the chloroplast. In terms of biological role, one of the primary rRNA binding proteins, it binds directly to 16S rRNA where it nucleates assembly of the body of the 30S subunit. With S5 and S12 plays an important role in translational accuracy. The sequence is that of Small ribosomal subunit protein uS4c (rps4) from Oltmannsiellopsis viridis (Marine flagellate).